The following is an 812-amino-acid chain: E3 UFM1-protein ligase 1 homolog (812 aa).

Residues 389 to 495 (IKHSAGQGKP…KTKEDNTNIF (107 aa)) form a disordered region. Composition is skewed to basic and acidic residues over residues 403–415 (SEHR…KDLG) and 475–491 (DAKH…KEDN).

This sequence belongs to the UFL1 family.

Functionally, E3 UFM1-protein ligase that mediates ufmylation of target proteins. In Oryza sativa subsp. indica (Rice), this protein is E3 UFM1-protein ligase 1 homolog.